We begin with the raw amino-acid sequence, 824 residues long: Putative beta-glucuronidase (824 aa).

Residues 26–43 (YLKLVLVLYLIMVSWSGY) traverse the membrane as a helical segment. The active-site Proton donor is the glutamate 430.

This sequence belongs to the glycosyl hydrolase 2 family.

Its subcellular location is the membrane. The catalysed reaction is a beta-D-glucuronoside + H2O = D-glucuronate + an alcohol. Glycoside hydrolase that may be involved in ulvan degradation. Ulvan is the main polysaccharide component of the Ulvales (green seaweed) cell wall. It is composed of disaccharide building blocks comprising 3-sulfated rhamnose (Rha3S) linked to D-glucuronic acid (GlcA), L-iduronic acid (IduA), or D-xylose (Xyl). The sequence is that of Putative beta-glucuronidase from Formosa agariphila (strain DSM 15362 / KCTC 12365 / LMG 23005 / KMM 3901 / M-2Alg 35-1).